Reading from the N-terminus, the 124-residue chain is Urease subunit beta (124 aa).

It belongs to the urease beta subunit family. As to quaternary structure, heterotrimer of UreA (gamma), UreB (beta) and UreC (alpha) subunits. Three heterotrimers associate to form the active enzyme.

The protein localises to the cytoplasm. It carries out the reaction urea + 2 H2O + H(+) = hydrogencarbonate + 2 NH4(+). Its pathway is nitrogen metabolism; urea degradation; CO(2) and NH(3) from urea (urease route): step 1/1. The sequence is that of Urease subunit beta from Bacillus subtilis (strain 168).